The chain runs to 1216 residues: Histone-lysine N-methyltransferase SETDB1-B (1216 aa).

Residues 38-61 adopt a coiled-coil conformation; it reads KADLEQLQEWVEQREKEVADIDAL. Tudor domains lie at 266–329 and 356–412; these read RLFV…LKKT and LLKP…NLKM. A disordered region spans residues 417 to 513; that stretch reads SQEKKMAGQQ…QGMPSDLQPK (97 aa). Pro residues predominate over residues 467 to 478; it reads PVAPQPAGPPQP. The span at 482-498 shows a compositional bias: polar residues; the sequence is ESPSFKSQMAKKSTGQL. Residues 595 to 666 form the MBD domain; it reads HRGRNPLLTP…EMFCLDPYVL (72 aa). The Pre-SET domain maps to 728-801; that stretch reads VGCDCTDGCR…MCTNRLVQHG (74 aa). Positions 730, 732, 736, 742, 744, 782, 786, 788, and 793 each coordinate Zn(2+). The SET domain occupies 804 to 1179; sequence VRLQLFKTQN…AGTELTWDYN (376 aa). S-adenosyl-L-methionine-binding positions include 814–816, Asp-852, and Tyr-854; that span reads KGW. 3 disordered regions span residues 892–944, 961–1057, and 1081–1108; these read LPAS…DTFV, RRQA…KTQA, and KSGG…NGPK. The span at 918–940 shows a compositional bias: acidic residues; that stretch reads DSSEESDDEKDDDSNEDDSDSSD. Basic and acidic residues-rich tracts occupy residues 966 to 976 and 983 to 997; these read GLKEESQDSKD and GEDR…ETGK. Positions 1003–1016 are enriched in polar residues; that stretch reads WLTNQSSTSANQSV. 2 stretches are compositionally biased toward basic and acidic residues: residues 1020–1029 and 1046–1055; these read GGIKTEKKDV and DDNKEREKKT. Residues 1082–1105 show a composition bias toward gly residues; that stretch reads SGGGGAGGGGSGPSHGHGGGGGDN. Residues Arg-1133 and 1136-1137 contribute to the S-adenosyl-L-methionine site; that span reads NH. Residues Cys-1139, Cys-1192, Cys-1194, and Cys-1199 each contribute to the Zn(2+) site. In terms of domain architecture, Post-SET spans 1188 to 1204; the sequence is KELLCCCGSTECRGRLL.

Belongs to the class V-like SAM-binding methyltransferase superfamily. Histone-lysine methyltransferase family. Suvar3-9 subfamily.

Its subcellular location is the nucleus. It localises to the chromosome. The catalysed reaction is L-lysyl(4)-[histone H3] + 3 S-adenosyl-L-methionine = N(6),N(6),N(6)-trimethyl-L-lysyl(4)-[histone H3] + 3 S-adenosyl-L-homocysteine + 3 H(+). In terms of biological role, histone methyltransferase that specifically trimethylates 'Lys-9' of histone H3. H3 'Lys-9' trimethylation represents a specific tag for epigenetic transcriptional repression by recruiting HP1 (CBX1, CBX3 and/or CBX5) proteins to methylated histones. Mainly functions in euchromatin regions, thereby playing a central role in the silencing of euchromatic genes. H3 'Lys-9' trimethylation is coordinated with DNA methylation. Plays a role in promoter hypermethylation and transcriptional silencing of tumor suppressor genes (TSGs) or other tumor-related genes. Also required to maintain a transcriptionally repressive state of genes in undifferentiated embryonic stem cells (ESCs). Associates at promoter regions of tumor suppressor genes (TSGs) leading to their gene silencing. The sequence is that of Histone-lysine N-methyltransferase SETDB1-B (setdb1b) from Danio rerio (Zebrafish).